The following is a 263-amino-acid chain: tRNA pseudouridine synthase A (263 aa).

Asp54 functions as the Nucleophile in the catalytic mechanism. Tyr113 is a binding site for substrate.

It belongs to the tRNA pseudouridine synthase TruA family. Homodimer.

The enzyme catalyses uridine(38/39/40) in tRNA = pseudouridine(38/39/40) in tRNA. Formation of pseudouridine at positions 38, 39 and 40 in the anticodon stem and loop of transfer RNAs. This is tRNA pseudouridine synthase A from Lactobacillus helveticus (strain DPC 4571).